The chain runs to 283 residues: Bifunctional protein FolD (283 aa).

NADP(+)-binding positions include 164–166 (GRS), Ser189, and Ile230.

This sequence belongs to the tetrahydrofolate dehydrogenase/cyclohydrolase family. Homodimer.

The enzyme catalyses (6R)-5,10-methylene-5,6,7,8-tetrahydrofolate + NADP(+) = (6R)-5,10-methenyltetrahydrofolate + NADPH. It carries out the reaction (6R)-5,10-methenyltetrahydrofolate + H2O = (6R)-10-formyltetrahydrofolate + H(+). It participates in one-carbon metabolism; tetrahydrofolate interconversion. Catalyzes the oxidation of 5,10-methylenetetrahydrofolate to 5,10-methenyltetrahydrofolate and then the hydrolysis of 5,10-methenyltetrahydrofolate to 10-formyltetrahydrofolate. The sequence is that of Bifunctional protein FolD from Lactobacillus delbrueckii subsp. bulgaricus (strain ATCC 11842 / DSM 20081 / BCRC 10696 / JCM 1002 / NBRC 13953 / NCIMB 11778 / NCTC 12712 / WDCM 00102 / Lb 14).